A 338-amino-acid polypeptide reads, in one-letter code: Anthranilate phosphoribosyltransferase (338 aa).

5-phospho-alpha-D-ribose 1-diphosphate contacts are provided by residues glycine 81, 84–85 (GD), serine 89, 91–94 (NVST), 109–117 (KHGNRALSS), and alanine 121. Glycine 81 is an anthranilate binding site. Mg(2+) is bound at residue serine 93. Asparagine 112 is a binding site for anthranilate. An anthranilate-binding site is contributed by arginine 167. Residues aspartate 226 and glutamate 227 each contribute to the Mg(2+) site.

Belongs to the anthranilate phosphoribosyltransferase family. Homodimer. Requires Mg(2+) as cofactor.

The enzyme catalyses N-(5-phospho-beta-D-ribosyl)anthranilate + diphosphate = 5-phospho-alpha-D-ribose 1-diphosphate + anthranilate. Its pathway is amino-acid biosynthesis; L-tryptophan biosynthesis; L-tryptophan from chorismate: step 2/5. Functionally, catalyzes the transfer of the phosphoribosyl group of 5-phosphorylribose-1-pyrophosphate (PRPP) to anthranilate to yield N-(5'-phosphoribosyl)-anthranilate (PRA). The polypeptide is Anthranilate phosphoribosyltransferase (Rhodopseudomonas palustris (strain BisB5)).